A 144-amino-acid chain; its full sequence is Transcription antitermination protein NusB (144 aa).

This sequence belongs to the NusB family.

In terms of biological role, involved in transcription antitermination. Required for transcription of ribosomal RNA (rRNA) genes. Binds specifically to the boxA antiterminator sequence of the ribosomal RNA (rrn) operons. The sequence is that of Transcription antitermination protein NusB from Streptomyces avermitilis (strain ATCC 31267 / DSM 46492 / JCM 5070 / NBRC 14893 / NCIMB 12804 / NRRL 8165 / MA-4680).